The following is a 186-amino-acid chain: Pyridoxal 5'-phosphate synthase subunit PdxT (186 aa).

46–48 (GES) is an L-glutamine binding site. The active-site Nucleophile is the Cys78. Residues Arg105 and 134-135 (IR) each bind L-glutamine. Active-site charge relay system residues include His170 and Glu172.

The protein belongs to the glutaminase PdxT/SNO family. In terms of assembly, in the presence of PdxS, forms a dodecamer of heterodimers. Only shows activity in the heterodimer.

The enzyme catalyses aldehydo-D-ribose 5-phosphate + D-glyceraldehyde 3-phosphate + L-glutamine = pyridoxal 5'-phosphate + L-glutamate + phosphate + 3 H2O + H(+). The catalysed reaction is L-glutamine + H2O = L-glutamate + NH4(+). The protein operates within cofactor biosynthesis; pyridoxal 5'-phosphate biosynthesis. Its function is as follows. Catalyzes the hydrolysis of glutamine to glutamate and ammonia as part of the biosynthesis of pyridoxal 5'-phosphate. The resulting ammonia molecule is channeled to the active site of PdxS. This chain is Pyridoxal 5'-phosphate synthase subunit PdxT, found in Clostridium acetobutylicum (strain ATCC 824 / DSM 792 / JCM 1419 / IAM 19013 / LMG 5710 / NBRC 13948 / NRRL B-527 / VKM B-1787 / 2291 / W).